Consider the following 497-residue polypeptide: Serine hydroxymethyltransferase (497 aa).

(6S)-5,6,7,8-tetrahydrofolate is bound by residues L176 and 180–182; that span reads GHL. K289 carries the N6-(pyridoxal phosphate)lysine modification. E306 lines the (6S)-5,6,7,8-tetrahydrofolate pocket.

This sequence belongs to the SHMT family. In terms of assembly, homodimer. The cofactor is pyridoxal 5'-phosphate.

It is found in the cytoplasm. It carries out the reaction (6R)-5,10-methylene-5,6,7,8-tetrahydrofolate + glycine + H2O = (6S)-5,6,7,8-tetrahydrofolate + L-serine. It participates in one-carbon metabolism; tetrahydrofolate interconversion. The protein operates within amino-acid biosynthesis; glycine biosynthesis; glycine from L-serine: step 1/1. Functionally, catalyzes the reversible interconversion of serine and glycine with tetrahydrofolate (THF) serving as the one-carbon carrier. This reaction serves as the major source of one-carbon groups required for the biosynthesis of purines, thymidylate, methionine, and other important biomolecules. Also exhibits THF-independent aldolase activity toward beta-hydroxyamino acids, producing glycine and aldehydes, via a retro-aldol mechanism. The protein is Serine hydroxymethyltransferase of Chlamydia pneumoniae (Chlamydophila pneumoniae).